Here is a 385-residue protein sequence, read N- to C-terminus: Transcription termination factor 2, mitochondrial (385 aa).

A mitochondrion-targeting transit peptide spans 1–35 (MPWRLPTGHQLCRLCLLRKPRPALKIKPSSACVTY).

It belongs to the mTERF family. As to quaternary structure, monomer.

The protein localises to the mitochondrion matrix. The protein resides in the mitochondrion nucleoid. In terms of biological role, binds mitochondrial DNA and plays a role in the regulation of transcription of mitochondrial mRNA and rRNA species. This chain is Transcription termination factor 2, mitochondrial (Mterf2), found in Mus musculus (Mouse).